We begin with the raw amino-acid sequence, 244 residues long: MSWQRPDNRTAAQLRPVSFERHFTRYAPGSVLVKFGHTHVLCTASVAEEVPPFLQNTGQGWLTAEYRMLPGATQQRQPREMLKLSGRTAEIQRLIGRSLRAALDFRKLGSRTITVDADVLQADGGTRTAAITGGYVALHDAITWLYKQGALDPAQGSPLRQQVAALSVGIVQGEVLVDLCYEEDSQAEVDMNIVMNEQGSFIEIQGTAEAACFSRPQLLQMLEMAQAGIQELLQAQRQALNLER.

Phosphate is bound by residues arginine 87 and 125–127 (GTR).

The protein belongs to the RNase PH family. As to quaternary structure, homohexameric ring arranged as a trimer of dimers.

The catalysed reaction is tRNA(n+1) + phosphate = tRNA(n) + a ribonucleoside 5'-diphosphate. Phosphorolytic 3'-5' exoribonuclease that plays an important role in tRNA 3'-end maturation. Removes nucleotide residues following the 3'-CCA terminus of tRNAs; can also add nucleotides to the ends of RNA molecules by using nucleoside diphosphates as substrates, but this may not be physiologically important. Probably plays a role in initiation of 16S rRNA degradation (leading to ribosome degradation) during starvation. The polypeptide is Ribonuclease PH (Synechococcus sp. (strain JA-2-3B'a(2-13)) (Cyanobacteria bacterium Yellowstone B-Prime)).